The chain runs to 628 residues: Phomenoic acid biosynthesis cluster MFS-type transporter (628 aa).

The next 14 membrane-spanning stretches (helical) occupy residues 102-122 (IHGF…FLYA), 150-170 (VGFV…YGIL), 174-194 (WLYI…GAAP), 204-224 (VFAG…LSIN), 232-252 (AYLS…PVIG), 262-282 (WAFY…FFLL), 302-322 (FVGA…INFG), 329-349 (NSGT…AFAV), 375-395 (MLLF…IYFI), 407-427 (ALDS…TILV), 435-455 (FGYY…ANVF), 488-508 (GFEA…YAVI), 524-544 (IMIA…AVFI), and 595-615 (AKAF…SLGF).

The protein belongs to the major facilitator superfamily. TCR/Tet family.

It is found in the cell membrane. In terms of biological role, MFS-type transporter; part of the gene cluster that mediates the biosynthesis of phomenoic acid, a long chain aliphatic carboxylic acid that does not appear to be essential for pathogenicity but may play a role in allowing to outcompete other fungi in the environmental niche via its antifungal properties. Is probably involved in the efflux of phomenoic acid. The sequence is that of Phomenoic acid biosynthesis cluster MFS-type transporter from Leptosphaeria maculans (strain JN3 / isolate v23.1.3 / race Av1-4-5-6-7-8) (Blackleg fungus).